Consider the following 331-residue polypeptide: GATA transcription factor 12 (331 aa).

2 disordered regions span residues 30-49 (ENDV…SSNF) and 105-138 (SGFK…SVPA). The segment covering 34 to 47 (VADSTTTTTITDSS) has biased composition (low complexity). Positions 116–134 (DTGSPENPNSSSPIFTTDV) are enriched in polar residues. The short motif at 139–146 (KARSKRSR) is the Nuclear localization signal element. Positions 174 to 218 (SSQQHLSPPTSPPLLMAPLGKKQAVDGGHRRKKDVSSPESGGAEE) are disordered. A GATA-type zinc finger spans residues 215–269 (GAEERRCLHCATDKTPQWRTGPMGPKTLCNACGVRYKSGRLVPEYRPAASPTFVL).

The protein belongs to the type IV zinc-finger family. Class A subfamily. In terms of tissue distribution, expressed in the vascular cylinder of roots. Expressed in the differentiation zone of the root stele.

Its subcellular location is the nucleus. In terms of biological role, transcriptional activator that specifically binds 5'-GATA-3' or 5'-GAT-3' motifs within gene promoters. May be involved in the regulation of some light-responsive genes. Transcription activator involved in xylem formation. Functions upstream of NAC030/VND7, a master switch of xylem vessel differentiation. This is GATA transcription factor 12 from Arabidopsis thaliana (Mouse-ear cress).